A 37-amino-acid polypeptide reads, in one-letter code: MKVRPSVKKMCDKCRLIKRKGTLRVICQNPKHKQRQG.

Belongs to the bacterial ribosomal protein bL36 family.

Its subcellular location is the plastid. The protein resides in the chloroplast. The sequence is that of Large ribosomal subunit protein bL36c (rpl36) from Chlorella vulgaris (Green alga).